The chain runs to 157 residues: Transcription antitermination protein NusB (157 aa).

The protein belongs to the NusB family.

In terms of biological role, involved in transcription antitermination. Required for transcription of ribosomal RNA (rRNA) genes. Binds specifically to the boxA antiterminator sequence of the ribosomal RNA (rrn) operons. The protein is Transcription antitermination protein NusB of Xylella fastidiosa (strain M12).